Consider the following 638-residue polypeptide: Threonine--tRNA ligase (638 aa).

Residues M1–T61 form the TGS domain. The interval D243 to P534 is catalytic. Zn(2+)-binding residues include C334, H385, and H511.

It belongs to the class-II aminoacyl-tRNA synthetase family. As to quaternary structure, homodimer. The cofactor is Zn(2+).

It is found in the cytoplasm. The enzyme catalyses tRNA(Thr) + L-threonine + ATP = L-threonyl-tRNA(Thr) + AMP + diphosphate + H(+). Its function is as follows. Catalyzes the attachment of threonine to tRNA(Thr) in a two-step reaction: L-threonine is first activated by ATP to form Thr-AMP and then transferred to the acceptor end of tRNA(Thr). Also edits incorrectly charged L-seryl-tRNA(Thr). The chain is Threonine--tRNA ligase from Idiomarina loihiensis (strain ATCC BAA-735 / DSM 15497 / L2-TR).